The sequence spans 220 residues: Deoxyribose-phosphate aldolase 2 (220 aa).

Aspartate 89 serves as the catalytic Proton donor/acceptor. Residue lysine 151 is the Schiff-base intermediate with acetaldehyde of the active site. Lysine 180 (proton donor/acceptor) is an active-site residue.

It belongs to the DeoC/FbaB aldolase family. DeoC type 1 subfamily.

The protein resides in the cytoplasm. It catalyses the reaction 2-deoxy-D-ribose 5-phosphate = D-glyceraldehyde 3-phosphate + acetaldehyde. Its pathway is carbohydrate degradation; 2-deoxy-D-ribose 1-phosphate degradation; D-glyceraldehyde 3-phosphate and acetaldehyde from 2-deoxy-alpha-D-ribose 1-phosphate: step 2/2. In terms of biological role, catalyzes a reversible aldol reaction between acetaldehyde and D-glyceraldehyde 3-phosphate to generate 2-deoxy-D-ribose 5-phosphate. The chain is Deoxyribose-phosphate aldolase 2 from Staphylococcus aureus (strain MRSA252).